A 312-amino-acid chain; its full sequence is MTSIVVAALYKFVTLDDYVALREPLLQTLLDNGVKGTLLLAEEGINGTVSGSREGIDALFAWLRSDPRLADIEHKESYCDEQPFYRTKVKLKKEIVTLGVPGVDPNKRVGQYVEAKDWNALISDPEVLLIDTRNDYEVAIGTFEGAVDPKTRSFREFPEYIKAHYDPARHKKVAMFCTGGIRCEKASSYMLGAGFEEVFHLRGGILKYLEEVPQEQSLWRGDCFVFDNRVTVRHDLSEGEYDQCHACRNPVSVEDRQSEHYVPGISCPHCWDSLSEKTRAGARERQKQIELARQRNQPHPLGRDPRQSTLEN.

Residues 123 to 217 (SDPEVLLIDT…YLEEVPQEQS (95 aa)) enclose the Rhodanese domain. C177 (cysteine persulfide intermediate) is an active-site residue. Basic and acidic residues predominate over residues 282–293 (ARERQKQIELAR). The interval 282-312 (ARERQKQIELARQRNQPHPLGRDPRQSTLEN) is disordered.

The protein belongs to the TrhO family.

The catalysed reaction is uridine(34) in tRNA + AH2 + O2 = 5-hydroxyuridine(34) in tRNA + A + H2O. Catalyzes oxygen-dependent 5-hydroxyuridine (ho5U) modification at position 34 in tRNAs. The protein is tRNA uridine(34) hydroxylase of Pseudomonas paraeruginosa (strain DSM 24068 / PA7) (Pseudomonas aeruginosa (strain PA7)).